Consider the following 35-residue polypeptide: Pheromone-binding protein 2 (35 aa).

This sequence belongs to the PBP/GOBP family. As to quaternary structure, homodimer. As to expression, antenna.

Functionally, this major soluble protein in olfactory sensilla of male moths might serve to solubilize the extremely hydrophobic pheromone molecules and to transport pheromone through the aqueous lymph to receptors located on olfactory cilia. The sequence is that of Pheromone-binding protein 2 from Lymantria dispar (Gypsy moth).